The primary structure comprises 878 residues: Valine--tRNA ligase (878 aa).

The 'HIGH' region signature appears at 45–55 (PNVTGQLHMGH). Residues 524–528 (KMSKS) carry the 'KMSKS' region motif. Residue lysine 527 coordinates ATP. Positions 804 to 871 (PLKDLIDLEK…REKEVLEQRI (68 aa)) form a coiled coil.

The protein belongs to the class-I aminoacyl-tRNA synthetase family. ValS type 1 subfamily. In terms of assembly, monomer.

It is found in the cytoplasm. The enzyme catalyses tRNA(Val) + L-valine + ATP = L-valyl-tRNA(Val) + AMP + diphosphate. Functionally, catalyzes the attachment of valine to tRNA(Val). As ValRS can inadvertently accommodate and process structurally similar amino acids such as threonine, to avoid such errors, it has a 'posttransfer' editing activity that hydrolyzes mischarged Thr-tRNA(Val) in a tRNA-dependent manner. This chain is Valine--tRNA ligase, found in Carboxydothermus hydrogenoformans (strain ATCC BAA-161 / DSM 6008 / Z-2901).